A 441-amino-acid chain; its full sequence is Methionine gamma-lyase (441 aa).

The tract at residues 1-25 (MAHFLETQEPLVFSGKKRNDRDDED) is disordered. K248 bears the N6-(pyridoxal phosphate)lysine mark.

The protein belongs to the trans-sulfuration enzymes family. As to quaternary structure, homotetramer. It depends on pyridoxal 5'-phosphate as a cofactor. Expressed in roots, stems, siliques, leaves, flowers and seeds after imbibition (at protein level). Transcripts accumulate in dry mature seeds, but at protein level, only present upon imbibition.

The protein localises to the cytoplasm. It carries out the reaction L-methionine + H2O = methanethiol + 2-oxobutanoate + NH4(+). Functionally, catalyzes the degradation of L-methionine to alpha-ketobutyrate, methanethiol and ammonia. Exhibits a high activity toward L-methionine, L-ethionine, L-homocysteine and seleno-L-methionine, but not L-cysteine. Involved in an alternative cysteine biosynthesis pathway to the reverse trans-sulfuration pathway (methionine-&gt;homocysteine-&gt;cystathionine-&gt;cysteine) in which methanethiol is an intermediate. Also mediates an alternative isoleucine biosynthesis pathway in which 2-ketobutyrate is an intermediate. In Arabidopsis thaliana (Mouse-ear cress), this protein is Methionine gamma-lyase (MGL).